We begin with the raw amino-acid sequence, 648 residues long: Zinc finger protein 202 (648 aa).

Residue Lys-22 forms a Glycyl lysine isopeptide (Lys-Gly) (interchain with G-Cter in SUMO2) linkage. In terms of domain architecture, SCAN box spans 46–127 (HQNFRRFRYQ…VTLVEGLQKQ (82 aa)). The tract at residues 146–221 (SEETVHLGVE…PDLPAERSSG (76 aa)) is disordered. Residues 165–182 (PVQSSTPEQSPEETTQSP) show a composition bias toward polar residues. In terms of domain architecture, KRAB spans 237 to 308 (VTFKDVAVCF…DIQEPQETQE (72 aa)). 2 consecutive C2H2-type zinc fingers follow at residues 397-419 (HDCS…LRTH) and 425-447 (YKCM…QKVH). Residues Lys-454 and Lys-460 each participate in a glycyl lysine isopeptide (Lys-Gly) (interchain with G-Cter in SUMO2) cross-link. Residue Ser-466 is modified to Phosphoserine. The C2H2-type 3 zinc-finger motif lies at 481–503 (YRCDDCGKHFRWTSDLVRHQRTH). Glycyl lysine isopeptide (Lys-Gly) (interchain with G-Cter in SUMO2) cross-links involve residues Lys-507 and Lys-521. C2H2-type zinc fingers lie at residues 509-531 (FFCT…QRIH), 537-559 (YLCG…RKTH), 565-587 (YLCS…LRGH), 593-615 (CRCN…QRTH), and 621-643 (FTCP…QRTH).

Interacts with SDP1. Highly expressed in testis. Also expressed in breast carcinoma cell lines.

It is found in the nucleus. Transcriptional repressor that binds to elements found predominantly in genes that participate in lipid metabolism. Among its targets are structural components of lipoprotein particles (apolipoproteins AIV, CIII, and E), enzymes involved in lipid processing (lipoprotein lipase, lecithin cholesteryl ester transferase), transporters involved in lipid homeostasis (ABCA1, ABCG1), and several genes involved in processes related to energy metabolism and vascular disease. The chain is Zinc finger protein 202 (ZNF202) from Homo sapiens (Human).